The sequence spans 237 residues: Small ribosomal subunit protein uS3 (237 aa).

In terms of domain architecture, KH type-2 spans 17–86 (VERHLGHELK…SPQIEVQQVD (70 aa)).

It belongs to the universal ribosomal protein uS3 family. As to quaternary structure, part of the 30S ribosomal subunit.

Its function is as follows. Binds the lower part of the 30S subunit head. The polypeptide is Small ribosomal subunit protein uS3 (Methanospirillum hungatei JF-1 (strain ATCC 27890 / DSM 864 / NBRC 100397 / JF-1)).